The sequence spans 138 residues: Protein transport protein got1 homolog (138 aa).

The Cytoplasmic portion of the chain corresponds to 1–7 (MFTDQQK). A helical transmembrane segment spans residues 8-28 (IGAMLSAMGLFFGFLGVLLFL). The Lumenal segment spans residues 29–30 (DR). Residues 31–51 (NLLALGNLLLVSGIVLILGLQ) form a helical membrane-spanning segment. Topologically, residues 52-62 (KTTKFFAQKKK) are cytoplasmic. A helical transmembrane segment spans residues 63-82 (IKGTILFFFGIVVLLVTRWT). Residues 83 to 87 (FVGMV) are Lumenal-facing. A helical membrane pass occupies residues 88–108 (IEIFGFVNLFGDAFPIVISIL). At 109 to 138 (RKLPIIGNILNHPLVNRLLQKADSGNELPF) the chain is on the cytoplasmic side.

This sequence belongs to the GOT1 family.

Its subcellular location is the golgi apparatus membrane. Its function is as follows. May be involved in fusion of ER-derived transport vesicles with the Golgi complex. This Dictyostelium discoideum (Social amoeba) protein is Protein transport protein got1 homolog (golt1).